A 259-amino-acid polypeptide reads, in one-letter code: 5'-nucleotidase SurE (259 aa).

Positions 8, 9, 40, and 92 each coordinate a divalent metal cation.

Belongs to the SurE nucleotidase family. It depends on a divalent metal cation as a cofactor.

Its subcellular location is the cytoplasm. It catalyses the reaction a ribonucleoside 5'-phosphate + H2O = a ribonucleoside + phosphate. Functionally, nucleotidase that shows phosphatase activity on nucleoside 5'-monophosphates. This is 5'-nucleotidase SurE from Xanthomonas euvesicatoria pv. vesicatoria (strain 85-10) (Xanthomonas campestris pv. vesicatoria).